A 462-amino-acid chain; its full sequence is Na(+)/H(+) antiporter NhaA 2 (462 aa).

The disordered stretch occupies residues 1–31 (MKSSTREQTPVTSPTPHDPTPPTPPRGSTPL). Residues 16-27 (PHDPTPPTPPRG) are compositionally biased toward pro residues. The next 11 membrane-spanning stretches (helical) occupy residues 52–72 (IGGA…NSPW), 96–116 (LTLG…IAGL), 134–154 (LVPV…YVLV), 165–185 (GWAI…AVIS), 195–215 (FLLT…AIFY), 218–238 (TLAV…GLLV), 244–264 (SWWL…ASGI), 309–329 (FAVP…LSGL), 337–357 (VALG…LGAT), 382–402 (LLGG…FGAG), and 408–428 (HVKV…AVVL).

It belongs to the NhaA Na(+)/H(+) (TC 2.A.33) antiporter family.

It localises to the cell membrane. The enzyme catalyses Na(+)(in) + 2 H(+)(out) = Na(+)(out) + 2 H(+)(in). In terms of biological role, na(+)/H(+) antiporter that extrudes sodium in exchange for external protons. In Kineococcus radiotolerans (strain ATCC BAA-149 / DSM 14245 / SRS30216), this protein is Na(+)/H(+) antiporter NhaA 2.